A 914-amino-acid polypeptide reads, in one-letter code: Ral guanine nucleotide dissociation stimulator (914 aa).

An N-terminal Ras-GEF domain is found at 112–249 (KVRTVKAGTL…RAHLLLAQLE (138 aa)). The interval 280–365 (ARAPSPVPAP…APVPSLQPSW (86 aa)) is disordered. A compositionally biased stretch (pro residues) spans 282–300 (APSPVPAPAPEPEPAPTPA). The segment covering 304 to 338 (ELEVAPAPAPELQQAPEPAVGLESAPAPALELEPA) has biased composition (low complexity). Positions 386-648 (PPDLVAEQFT…YNLSCELEPP (263 aa)) constitute a Ras-GEF domain. Disordered regions lie at residues 666–689 (KRWSDRQAPSTELSTSGSSHSKSC) and 728–776 (PESP…RTHK). Low complexity-rich tracts occupy residues 675–686 (STELSTSGSSHS) and 745–772 (SSPETSGISSASSSTSSSSASTTPVAAT). The Ras-associating domain maps to 798–885 (DCCIIRVSLD…YDFVLKKRTF (88 aa)). Tyr-814 carries the post-translational modification Phosphotyrosine; by MET.

As to quaternary structure, interacts with RIT1 and RIT2. Interacts with OOG1. Interacts with TRAF3. Interacts with HRAS. Phosphorylation of Tyr-814 by MET blocks HRAS binding.

It is found in the cytoplasm. The protein resides in the nucleus. Its function is as follows. Functions as a guanine nucleotide exchange factor (GEF) activating either RalA or RalB GTPases and plays an important role in intracellular transport. Interacts and acts as an effector molecule for R-Ras, H-Ras, K-Ras, and Rap. During bacterial clearance, recognizes 'Lys-33'-linked polyubiquitinated TRAF3 and subsequently mediates assembly of the exocyst complex. The polypeptide is Ral guanine nucleotide dissociation stimulator (RALGDS) (Homo sapiens (Human)).